We begin with the raw amino-acid sequence, 86 residues long: MSTQPIITRFVLTEKAIRLAEKENTLTIVVPRSVNKKVIKDYVEKAYKVKVIDVRTLITMEGEKKAYVRLSSENNAIELLTNLGLL.

The protein belongs to the universal ribosomal protein uL23 family. In terms of assembly, part of the 50S ribosomal subunit. Contacts protein L29.

In terms of biological role, binds to 23S rRNA. One of the proteins that surrounds the polypeptide exit tunnel on the outside of the ribosome. This chain is Large ribosomal subunit protein uL23, found in Caldivirga maquilingensis (strain ATCC 700844 / DSM 13496 / JCM 10307 / IC-167).